The following is a 193-amino-acid chain: Glycerol-3-phosphate acyltransferase (193 aa).

Helical transmembrane passes span 2 to 22, 51 to 71, 78 to 98, 112 to 132, and 154 to 174; these read AFIISIIIAYLLGSLSFAVIV, QAAFYVLLGDAAKGLIAVLIA, GVSLAFVGLVAVLGHLFPVYF, VLLGLSFWIALFVIATWVIVV, and IIAGRTDYLFPVLIIAILLIW.

The protein belongs to the PlsY family. In terms of assembly, probably interacts with PlsX.

It localises to the cell inner membrane. It carries out the reaction an acyl phosphate + sn-glycerol 3-phosphate = a 1-acyl-sn-glycero-3-phosphate + phosphate. It functions in the pathway lipid metabolism; phospholipid metabolism. Functionally, catalyzes the transfer of an acyl group from acyl-phosphate (acyl-PO(4)) to glycerol-3-phosphate (G3P) to form lysophosphatidic acid (LPA). This enzyme utilizes acyl-phosphate as fatty acyl donor, but not acyl-CoA or acyl-ACP. The polypeptide is Glycerol-3-phosphate acyltransferase (Coxiella burnetii (strain CbuG_Q212) (Coxiella burnetii (strain Q212))).